A 100-amino-acid polypeptide reads, in one-letter code: Small ribosomal subunit protein uS17 (100 aa).

Belongs to the universal ribosomal protein uS17 family. Part of the 30S ribosomal subunit.

Its function is as follows. One of the primary rRNA binding proteins, it binds specifically to the 5'-end of 16S ribosomal RNA. The sequence is that of Small ribosomal subunit protein uS17 from Fervidobacterium nodosum (strain ATCC 35602 / DSM 5306 / Rt17-B1).